The following is a 223-amino-acid chain: DNA mismatch repair protein MutH (223 aa).

It belongs to the MutH family.

The protein localises to the cytoplasm. Functionally, sequence-specific endonuclease that cleaves unmethylated GATC sequences. It is involved in DNA mismatch repair. In Shewanella sp. (strain W3-18-1), this protein is DNA mismatch repair protein MutH.